A 251-amino-acid polypeptide reads, in one-letter code: MLLIPAIDLKDGQCVRLKQGDMDQATIFSEDPAAMARKWVDLGARRLHLVDLNGAFAGKPKNLEAIEAILDEVGDEIPVQLGGGIRSLETIEKYLDAGLSYVIIGTAAVKNPGFLQDACTAFSGSIIVGLDAKDGKVATDGWSKLTGHEVIDLAKKFEDYGVESIVYTDIGRDGMLQGINIDATVKLAQAVGIPVIASGGLSNLTDIESLCEVEEHGVEGVICGRAIYSGDLDFAAAQKRADELNGELDNA.

The Proton acceptor role is filled by Asp8. The Proton donor role is filled by Asp131.

This sequence belongs to the HisA/HisF family.

The protein resides in the cytoplasm. The catalysed reaction is 1-(5-phospho-beta-D-ribosyl)-5-[(5-phospho-beta-D-ribosylamino)methylideneamino]imidazole-4-carboxamide = 5-[(5-phospho-1-deoxy-D-ribulos-1-ylimino)methylamino]-1-(5-phospho-beta-D-ribosyl)imidazole-4-carboxamide. The protein operates within amino-acid biosynthesis; L-histidine biosynthesis; L-histidine from 5-phospho-alpha-D-ribose 1-diphosphate: step 4/9. In Burkholderia cenocepacia (strain ATCC BAA-245 / DSM 16553 / LMG 16656 / NCTC 13227 / J2315 / CF5610) (Burkholderia cepacia (strain J2315)), this protein is 1-(5-phosphoribosyl)-5-[(5-phosphoribosylamino)methylideneamino] imidazole-4-carboxamide isomerase.